The sequence spans 279 residues: Large ribosomal subunit protein uL3 (279 aa).

Q151 is subject to N5-methylglutamine.

It belongs to the universal ribosomal protein uL3 family. In terms of assembly, part of the 50S ribosomal subunit. Forms a cluster with proteins L14 and L19. In terms of processing, methylated by PrmB.

Functionally, one of the primary rRNA binding proteins, it binds directly near the 3'-end of the 23S rRNA, where it nucleates assembly of the 50S subunit. The sequence is that of Large ribosomal subunit protein uL3 from Dinoroseobacter shibae (strain DSM 16493 / NCIMB 14021 / DFL 12).